Here is a 624-residue protein sequence, read N- to C-terminus: Outer dynein arm-docking complex subunit 4 (624 aa).

TPR repeat units follow at residues Phe11–Asp44, Asn46–Phe78, Cys79–Arg112, Leu273–Glu309, Gly318–His351, Ser358–Thr391, Thr395–Glu428, and Leu435–Val468. Residues Met511–Glu624 are disordered. Composition is skewed to basic and acidic residues over residues Ser520–Ser557, Ile576–Ser588, and Pro595–Glu624.

Component of the outer dynein arm-docking complex along with ODAD1, ODAD2, and ODAD3. Interacts with ODAD1; this interaction may facilitate the recruitment and/or attachment of outer dynein arm docking complex proteins, including ODAD1, ODAD3 and ODAD2, to ciliary axonemes. Interacts with components of the IFT complex A, including IFT140, TTC21B/IFT139 and WDR19/IFT144, and the IFT complex B, including IFT46, IFT52 and IFT57. Interacts with CFAP53.

The protein localises to the cell projection. It localises to the cilium. The protein resides in the cytoplasm. It is found in the cytoskeleton. Its subcellular location is the cilium axoneme. Functionally, component of the outer dynein arm-docking complex (ODA-DC) that mediates outer dynein arms (ODA) binding onto the doublet microtubule. Plays an essential role for the assembly of ODA-DC and for the docking of ODA in ciliary axoneme. The polypeptide is Outer dynein arm-docking complex subunit 4 (Odad4) (Mus musculus (Mouse)).